We begin with the raw amino-acid sequence, 221 residues long: Max dimerization protein 1 (221 aa).

The Nuclear localization signal motif lies at Arg-21–Lys-49. 2 disordered regions span residues His-28–Arg-67 and Asp-176–Tyr-202. Residues Asn-55–Leu-107 form the bHLH domain. Residues Ser-192–Tyr-202 show a composition bias toward polar residues.

In terms of assembly, efficient DNA binding requires dimerization with another bHLH protein. Binds DNA as a heterodimer with MAX.

The protein resides in the nucleus. Its function is as follows. Transcriptional repressor. MAD binds with MAX to form a sequence-specific DNA-binding protein complex which recognizes the core sequence 5'-CAC[GA]TG-3'. MAD thus antagonizes MYC transcriptional activity by competing for MAX. This Xenopus tropicalis (Western clawed frog) protein is Max dimerization protein 1 (mxd1).